The chain runs to 476 residues: Serine/threonine-protein kinase Chk1 (476 aa).

The interaction with CLSPN stretch occupies residues methionine 1–tyrosine 265. The Protein kinase domain maps to tryptophan 9 to tyrosine 265. Residues leucine 15–valine 23 and lysine 38 each bind ATP. The Proton acceptor role is filled by aspartate 130. Residue lysine 132 forms a Glycyl lysine isopeptide (Lys-Gly) (interchain with G-Cter in ubiquitin) linkage. Residues lysine 270–leucine 327 form a disordered region. Phosphoserine is present on residues serine 280, serine 286, serine 296, and serine 301. Over residues glycine 281–glutamate 320 the composition is skewed to polar residues. Serine 317 carries the phosphoserine; by ATM and ATR modification. Serine 331 is subject to Phosphoserine. Serine 345 carries the post-translational modification Phosphoserine; by ATM and ATR. Positions glutamine 391–threonine 476 are autoinhibitory region. Lysine 436 is covalently cross-linked (Glycyl lysine isopeptide (Lys-Gly) (interchain with G-Cter in ubiquitin)). A phosphoserine mark is found at serine 467 and serine 468.

Belongs to the protein kinase superfamily. CAMK Ser/Thr protein kinase family. NIM1 subfamily. As to quaternary structure, interacts (phosphorylated by ATR) with RAD51. Interacts with and phosphorylates CLSPN, an adapter protein that regulates the ATR-dependent phosphorylation of CHEK1. Interacts with BRCA1. Interacts with and phosphorylates CDC25A, CDC25B and CDC25C. Interacts with FBXO6, which regulates CHEK1. Interacts with PPM1D, which regulates CHEK1 through dephosphorylation. Interacts with TIMELESS; DNA damage-dependent. Interacts with FEM1B; activates CHEK1 in response to stress. Interacts with TLK1. Interacts with XPO1 and YWHAZ. Interacts with CDK5RAP3; antagonizes CHEK1. Isoform 1 associates with isoform 2, the interaction is disrupted upon phosphorylation by ATR. In terms of processing, phosphorylated by ATR in a RAD17-dependent manner in response to ultraviolet irradiation and inhibition of DNA replication. Phosphorylated by ATM in response to ionizing irradiation. ATM and ATR can both phosphorylate Ser-317 and Ser-345 and this results in enhanced kinase activity. Phosphorylation at Ser-345 induces a change in the conformation of the protein, activates the kinase activity and is a prerequisite for interaction with FBXO6 and subsequent ubiquitination at Lys-436. Phosphorylation at Ser-345 also increases binding to 14-3-3 proteins and promotes nuclear retention. Conversely, dephosphorylation at Ser-345 by PPM1D may contribute to exit from checkpoint mediated cell cycle arrest. Phosphorylation at Ser-280 by AKT1/PKB, may promote mono and/or diubiquitination. Also phosphorylated at undefined residues during mitotic arrest, resulting in decreased activity. Ubiquitinated. Mono or diubiquitination promotes nuclear exclusion. The activated form (phosphorylated on Ser-345) is polyubiquitinated at Lys-436 by some SCF-type E3 ubiquitin ligase complex containing FBXO6 promoting its degradation. Ubiquitination and degradation are required to terminate the checkpoint and ensure that activated CHEK1 does not accumulate as cells progress through S phase, when replication forks encounter transient impediments during normal DNA replication. 'Lys-63'-mediated ubiquitination by TRAF4 at Lys-132 activates cell cycle arrest and activation of DNA repair. Post-translationally, proteolytically cleaved at the C-terminus by SPRTN during normal DNA replication, thereby promoting CHEK1 removal from chromatin and activating the protein kinase activity. In terms of tissue distribution, expressed ubiquitously with the most abundant expression in thymus, testis, small intestine and colon.

The protein resides in the nucleus. It localises to the chromosome. Its subcellular location is the cytoplasm. The protein localises to the cytoskeleton. It is found in the microtubule organizing center. The protein resides in the centrosome. It carries out the reaction L-seryl-[protein] + ATP = O-phospho-L-seryl-[protein] + ADP + H(+). It catalyses the reaction L-threonyl-[protein] + ATP = O-phospho-L-threonyl-[protein] + ADP + H(+). Its activity is regulated as follows. Activated through phosphorylation predominantly by ATR but also by ATM in response to DNA damage or inhibition of DNA replication. Activation is modulated by several mediators including CLSPN, BRCA1 and FEM1B. Proteolytic cleavage at the C-terminus by SPRTN during normal DNA replication activates the protein kinase activity. In terms of biological role, serine/threonine-protein kinase which is required for checkpoint-mediated cell cycle arrest and activation of DNA repair in response to the presence of DNA damage or unreplicated DNA. May also negatively regulate cell cycle progression during unperturbed cell cycles. This regulation is achieved by a number of mechanisms that together help to preserve the integrity of the genome. Recognizes the substrate consensus sequence [R-X-X-S/T]. Binds to and phosphorylates CDC25A, CDC25B and CDC25C. Phosphorylation of CDC25A at 'Ser-178' and 'Thr-507' and phosphorylation of CDC25C at 'Ser-216' creates binding sites for 14-3-3 proteins which inhibit CDC25A and CDC25C. Phosphorylation of CDC25A at 'Ser-76', 'Ser-124', 'Ser-178', 'Ser-279' and 'Ser-293' promotes proteolysis of CDC25A. Phosphorylation of CDC25A at 'Ser-76' primes the protein for subsequent phosphorylation at 'Ser-79', 'Ser-82' and 'Ser-88' by NEK11, which is required for polyubiquitination and degradation of CDCD25A. Inhibition of CDC25 leads to increased inhibitory tyrosine phosphorylation of CDK-cyclin complexes and blocks cell cycle progression. Also phosphorylates NEK6. Binds to and phosphorylates RAD51 at 'Thr-309', which promotes the release of RAD51 from BRCA2 and enhances the association of RAD51 with chromatin, thereby promoting DNA repair by homologous recombination. Phosphorylates multiple sites within the C-terminus of TP53, which promotes activation of TP53 by acetylation and promotes cell cycle arrest and suppression of cellular proliferation. Also promotes repair of DNA cross-links through phosphorylation of FANCE. Binds to and phosphorylates TLK1 at 'Ser-743', which prevents the TLK1-dependent phosphorylation of the chromatin assembly factor ASF1A. This may enhance chromatin assembly both in the presence or absence of DNA damage. May also play a role in replication fork maintenance through regulation of PCNA. May regulate the transcription of genes that regulate cell-cycle progression through the phosphorylation of histones. Phosphorylates histone H3.1 (to form H3T11ph), which leads to epigenetic inhibition of a subset of genes. May also phosphorylate RB1 to promote its interaction with the E2F family of transcription factors and subsequent cell cycle arrest. Phosphorylates SPRTN, promoting SPRTN recruitment to chromatin. Reduces replication stress and activates the G2/M checkpoint, by phosphorylating and inactivating PABIR1/FAM122A and promoting the serine/threonine-protein phosphatase 2A-mediated dephosphorylation and stabilization of WEE1 levels and activity. Functionally, endogenous repressor of isoform 1, interacts with, and antagonizes CHK1 to promote the S to G2/M phase transition. The chain is Serine/threonine-protein kinase Chk1 (CHEK1) from Homo sapiens (Human).